The primary structure comprises 494 residues: Ribose import ATP-binding protein RbsA (494 aa).

ABC transporter domains lie at 2-239 (IDMR…VGRQ) and 251-493 (IGEE…TGGN). Position 34-41 (34-41 (GENGAGKS)) interacts with ATP.

This sequence belongs to the ABC transporter superfamily. Ribose importer (TC 3.A.1.2.1) family. In terms of assembly, the complex is composed of an ATP-binding protein (RbsA), two transmembrane proteins (RbsC) and a solute-binding protein (RbsB).

Its subcellular location is the cell membrane. It catalyses the reaction D-ribose(out) + ATP + H2O = D-ribose(in) + ADP + phosphate + H(+). Part of the ABC transporter complex RbsABC involved in ribose import. Responsible for energy coupling to the transport system. The polypeptide is Ribose import ATP-binding protein RbsA (Geobacillus kaustophilus (strain HTA426)).